A 563-amino-acid polypeptide reads, in one-letter code: MLEEAGEVLENMLKASCLPLGFIVFLPAVLLLVAPPLPAADAAHEFTVYRMQQYDLQGQPYGTRNAVLNTEARTIDADVLSRRCVLMRLLDFSYEQYQKALRQSAGAVVIILPRAMAAVPQDVIRQFMETEPEMLAMETVVPVYFAVEDEALLSIYEQTQAASAAQGSASAAEVLLHTATANGFQMVTSGVQSKAVSDWLITSVEGRLTGLGGEDLPTIVIVAHYDAFGVAPWLSHGADSNGSGISVLLELARLFSRLYTYKRTHAAYNLLFFASGGGKFNYQGTKRWLEDNLDHTDSSLLQDNVAFVLCLDTVGRGDSLHLHVSKPPREGTLQHAFLRELEAVAAHQFPEVRFSMVHKKINLAEDILAWEHERFAIRRLPAFTLSHLESHRDGQRSSIMDVRSRVDSKTLTRNTRLIAEALTRVIYNLTEKGTPPDMPVFTEQMQIQQEQLDSVMDWLTNQPRAAQLVDKDGTLLSTLEHYLSRYLKEVKQHHIKADKRDPEFVFYDQLKQVMNAYRVKPAIFDLLLAVCIGAYLGMAYTAVQHFDLLYKTVQRLLVKAKTQ.

Residues 1 to 42 (MLEEAGEVLENMLKASCLPLGFIVFLPAVLLLVAPPLPAADA) form the signal peptide. Residues 43 to 522 (AHEFTVYRMQ…VMNAYRVKPA (480 aa)) lie on the Lumenal side of the membrane. N-linked (GlcNAc...) asparagine glycans are attached at residues N241 and N428. The helical transmembrane segment at 523–543 (IFDLLLAVCIGAYLGMAYTAV) threads the bilayer. The Cytoplasmic portion of the chain corresponds to 544 to 563 (QHFDLLYKTVQRLLVKAKTQ).

This sequence belongs to the nicastrin family. Component of the back of Sec61 (BOS) complex, composed of NCLN/Nicalin, NOMO1 and TMEM147. The BOS complex is part of the multi-pass translocon (MPT) complex, composed of three subcomplexes, the GEL complex (composed of RAB5IF/OPTI and TMCO1), the BOS complex (composed of NCLN/Nicalin, NOMO1 and TMEM147) and the PAT complex (composed of WDR83OS/Asterix and CCDC47). The MPT complex associates with the SEC61 complex.

The protein localises to the endoplasmic reticulum membrane. Its function is as follows. Component of the multi-pass translocon (MPT) complex that mediates insertion of multi-pass membrane proteins into the lipid bilayer of membranes. The MPT complex takes over after the SEC61 complex: following membrane insertion of the first few transmembrane segments of proteins by the SEC61 complex, the MPT complex occludes the lateral gate of the SEC61 complex to promote insertion of subsequent transmembrane regions. May antagonize Nodal signaling and subsequent organization of axial structures during mesodermal patterning, via its interaction with NOMO. This Canis lupus familiaris (Dog) protein is BOS complex subunit NCLN.